The sequence spans 364 residues: DNA-(apurinic or apyrimidinic site) endonuclease (364 aa).

Basic and acidic residues-rich tracts occupy residues methionine 1 to asparagine 12 and proline 23 to glutamine 39. A disordered region spans residues methionine 1 to proline 42. A Mg(2+)-binding site is contributed by glutamate 80. Tyrosine 182 is a catalytic residue. The Mg(2+) site is built by aspartate 222, asparagine 224, and aspartate 342. Aspartate 222 acts as the Proton donor/acceptor in catalysis.

This sequence belongs to the DNA repair enzymes AP/exoA family. In terms of assembly, interacts with ROS1. ROS1 is required for APE1L to stably associate with the DNA substrate. Mg(2+) is required as a cofactor. In terms of tissue distribution, expressed in leaves, flower buds and developing siliques. Not detected in roots.

The protein localises to the nucleus. It is found in the nucleolus. Functionally, apurinic/apyrimidinic (AP) endonuclease involved in active DNA demethylation and gene imprinting. According to a report, also displays an in vitro 3'-phosphatase activity. According to another report, has no in vitro 3'-phosphatase activity. Catalyzes the conversion of the 3'-blocking groups 3'-phosphor-alpha,beta-unsaturated aldehyde (3'-PUA) generated by ROS1 to 3'-OH. Has a strong non-specific affinity to DNA. Redundant with APE2 and at least one functional allele is required for seed viability. The polypeptide is DNA-(apurinic or apyrimidinic site) endonuclease (Arabidopsis thaliana (Mouse-ear cress)).